An 81-amino-acid chain; its full sequence is ATP synthase subunit c (81 aa).

The next 2 membrane-spanning stretches (helical) occupy residues 7–27 and 57–77; these read AASVLSAALAIGLGSLGPGLG and LAFMEALTIYGLVVALVLLFA.

This sequence belongs to the ATPase C chain family. As to quaternary structure, F-type ATPases have 2 components, F(1) - the catalytic core - and F(0) - the membrane proton channel. F(1) has five subunits: alpha(3), beta(3), gamma(1), delta(1), epsilon(1). F(0) has four main subunits: a(1), b(1), b'(1) and c(10-14). The alpha and beta chains form an alternating ring which encloses part of the gamma chain. F(1) is attached to F(0) by a central stalk formed by the gamma and epsilon chains, while a peripheral stalk is formed by the delta, b and b' chains.

It localises to the cellular thylakoid membrane. In terms of biological role, f(1)F(0) ATP synthase produces ATP from ADP in the presence of a proton or sodium gradient. F-type ATPases consist of two structural domains, F(1) containing the extramembraneous catalytic core and F(0) containing the membrane proton channel, linked together by a central stalk and a peripheral stalk. During catalysis, ATP synthesis in the catalytic domain of F(1) is coupled via a rotary mechanism of the central stalk subunits to proton translocation. Key component of the F(0) channel; it plays a direct role in translocation across the membrane. A homomeric c-ring of between 10-14 subunits forms the central stalk rotor element with the F(1) delta and epsilon subunits. The protein is ATP synthase subunit c of Synechococcus sp. (strain JA-3-3Ab) (Cyanobacteria bacterium Yellowstone A-Prime).